Here is a 348-residue protein sequence, read N- to C-terminus: GTP 3',8-cyclase (348 aa).

Residues 24 to 242 (PFGRAVTYLR…EKQFTLTDID (219 aa)) enclose the Radical SAM core domain. Arg-33 contributes to the GTP binding site. [4Fe-4S] cluster contacts are provided by Cys-40 and Cys-44. An S-adenosyl-L-methionine-binding site is contributed by Tyr-46. Cys-47 provides a ligand contact to [4Fe-4S] cluster. Residue Arg-82 coordinates GTP. S-adenosyl-L-methionine is bound at residue Gly-86. Position 115 (Thr-115) interacts with GTP. Residue Ser-139 coordinates S-adenosyl-L-methionine. Lys-175 contributes to the GTP binding site. Met-209 provides a ligand contact to S-adenosyl-L-methionine. [4Fe-4S] cluster is bound by residues Cys-272 and Cys-275. 277 to 279 (RVR) provides a ligand contact to GTP. Cys-289 contacts [4Fe-4S] cluster.

The protein belongs to the radical SAM superfamily. MoaA family. As to quaternary structure, monomer and homodimer. It depends on [4Fe-4S] cluster as a cofactor.

The enzyme catalyses GTP + AH2 + S-adenosyl-L-methionine = (8S)-3',8-cyclo-7,8-dihydroguanosine 5'-triphosphate + 5'-deoxyadenosine + L-methionine + A + H(+). It functions in the pathway cofactor biosynthesis; molybdopterin biosynthesis. In terms of biological role, catalyzes the cyclization of GTP to (8S)-3',8-cyclo-7,8-dihydroguanosine 5'-triphosphate. The polypeptide is GTP 3',8-cyclase (Rhizobium etli (strain CIAT 652)).